The following is a 303-amino-acid chain: Monoglyceride lipase (303 aa).

Thr-10 carries the post-translational modification Phosphothreonine. Tyr-58 bears the 3'-nitrotyrosine mark. Catalysis depends on Ser-122, which acts as the Nucleophile. Ser-189 is subject to Phosphoserine. Catalysis depends on charge relay system residues Asp-239 and His-269.

This sequence belongs to the AB hydrolase superfamily. Monoacylglycerol lipase family. Homodimer. As to expression, ubiquitous.

It is found in the cytoplasm. The protein resides in the cytosol. It localises to the membrane. It catalyses the reaction Hydrolyzes glycerol monoesters of long-chain fatty acids.. The enzyme catalyses a 1-acylglycerol + H2O = glycerol + a fatty acid + H(+). The catalysed reaction is a 2-acylglycerol + H2O = glycerol + a fatty acid + H(+). It carries out the reaction 2-(5Z,8Z,11Z,14Z-eicosatetraenoyl)-glycerol + H2O = glycerol + (5Z,8Z,11Z,14Z)-eicosatetraenoate + H(+). It catalyses the reaction 1-octanoylglycerol + H2O = octanoate + glycerol + H(+). The enzyme catalyses 1-decanoylglycerol + H2O = decanoate + glycerol + H(+). The catalysed reaction is 1-dodecanoylglycerol + H2O = dodecanoate + glycerol + H(+). It carries out the reaction 1-tetradecanoylglycerol + H2O = tetradecanoate + glycerol + H(+). It catalyses the reaction 2-hexadecanoylglycerol + H2O = glycerol + hexadecanoate + H(+). The enzyme catalyses 1-(9Z-octadecenoyl)-glycerol + H2O = glycerol + (9Z)-octadecenoate + H(+). The catalysed reaction is 2-(9Z-octadecenoyl)-glycerol + H2O = glycerol + (9Z)-octadecenoate + H(+). It carries out the reaction 2-(9Z,12Z-octadecadienoyl)-glycerol + H2O = (9Z,12Z)-octadecadienoate + glycerol + H(+). It catalyses the reaction 1-(5Z,8Z,11Z,14Z-eicosatetraenoyl)-glycerol + H2O = glycerol + (5Z,8Z,11Z,14Z)-eicosatetraenoate + H(+). The enzyme catalyses 1-(9Z,12Z-octadecadienoyl)-glycerol + H2O = (9Z,12Z)-octadecadienoate + glycerol + H(+). The catalysed reaction is 1-hexadecanoylglycerol + H2O = glycerol + hexadecanoate + H(+). It carries out the reaction 1-octadecanoylglycerol + H2O = octadecanoate + glycerol + H(+). It catalyses the reaction prostaglandin E2 1-glyceryl ester + H2O = prostaglandin E2 + glycerol + H(+). The enzyme catalyses prostaglandin D2-1-glycerol ester + H2O = prostaglandin D2 + glycerol + H(+). The catalysed reaction is 2-glyceryl-15-deoxy-Delta(12,14)-prostaglandin J2 + H2O = 15-deoxy-Delta(12,14)-prostaglandin J2 + glycerol + H(+). It carries out the reaction prostaglandin F2alpha 1-glyceryl ester + H2O = prostaglandin F2alpha + glycerol + H(+). The protein operates within glycerolipid metabolism; triacylglycerol degradation. Functionally, converts monoacylglycerides to free fatty acids and glycerol. Hydrolyzes the endocannabinoid 2-arachidonoylglycerol, and thereby contributes to the regulation of endocannabinoid signaling, nociperception and perception of pain. Regulates the levels of fatty acids that serve as signaling molecules and promote cancer cell migration, invasion and tumor growth. In Mus musculus (Mouse), this protein is Monoglyceride lipase.